The chain runs to 796 residues: Potassium transporter 10 (796 aa).

The tract at residues 1–30 (MAGRVESSIGGGEIDEEGDERGSMWDLDQS) is disordered. Over 1–58 (MAGRVESSIGGGEIDEEGDERGSMWDLDQSLDQPMDEEAGRLRNMYREKKFSAFLLLQ) the chain is Cytoplasmic. The chain crosses the membrane as a helical span at residues 59-79 (LSFQSLGVVYGDLGTSPLYVF). The Extracellular segment spans residues 80-95 (YNTFPRGIKDPEDIIG). The helical transmembrane segment at 96–116 (ALSLIIYSLTLIPLLKYVFVV) threads the bilayer. Residues 117–184 (CKANDNGQGG…ENGTSRKNAL (68 aa)) are Cytoplasmic-facing. A helical transmembrane segment spans residues 185–205 (LILVLVGTCMVIGDGILTPAI). At 206 to 217 (SVLSAAGGLRVN) the chain is on the extracellular side. A helical transmembrane segment spans residues 218-238 (LPHINNGIVVVVAVVILVSLF). The Cytoplasmic segment spans residues 239-248 (SVQHYGTDRV). The chain crosses the membrane as a helical span at residues 249–269 (GWLFAPIVFLWFLFIASIGMF). At 270-298 (NIWKHDPSVLKAFSPVYIFRYFKRGGQDR) the chain is on the extracellular side. The helical transmembrane segment at 299–319 (WTSLGGIMLSITGIEALFADL) threads the bilayer. Topologically, residues 320–321 (SH) are cytoplasmic. Residues 322 to 342 (FPVSAVQFAFTVIVFPCLLLA) traverse the membrane as a helical segment. At 343-368 (YSGQAAYLRKYPHHVEDAFYQSIPKR) the chain is on the extracellular side. The chain crosses the membrane as a helical span at residues 369-389 (VYWPMFIIATAAAIVASQATI). Residues 390 to 420 (SATFSLIKQALAHGCFPRVKVVHTSRKFLGQ) are Cytoplasmic-facing. The chain crosses the membrane as a helical span at residues 421 to 441 (IYVPDINWILMILCIAVTAGF). The Extracellular segment spans residues 442–453 (KNQNQIGNAYGT). The helical transmembrane segment at 454 to 474 (AVVIVMLVTTLLMMLIMILVW) threads the bilayer. Over 475-480 (RCHWVL) the chain is Cytoplasmic. Residues 481–501 (VLLFTLLSLVVECTYFSAVLF) form a helical membrane-spanning segment. Residues 502-505 (KVNQ) are Extracellular-facing. Residues 506 to 526 (GGWVPLVIAAAFLVIMYVWHY) traverse the membrane as a helical segment. The Cytoplasmic segment spans residues 527–796 (GTLKRYEFEM…LLNVGQIFYV (270 aa)).

The protein belongs to the HAK/KUP transporter (TC 2.A.72.3) family.

It localises to the cell membrane. Its function is as follows. Putative potassium transporter. The sequence is that of Potassium transporter 10 (POT10) from Arabidopsis thaliana (Mouse-ear cress).